We begin with the raw amino-acid sequence, 89 residues long: Acylphosphatase (89 aa).

The region spanning 3–89 (RMTAWVHGFV…RGDLTGFVER (87 aa)) is the Acylphosphatase-like domain. Residues Arg-18 and Asn-36 contribute to the active site.

This sequence belongs to the acylphosphatase family.

It catalyses the reaction an acyl phosphate + H2O = a carboxylate + phosphate + H(+). This Rhodococcus jostii (strain RHA1) protein is Acylphosphatase (acyP).